The primary structure comprises 301 residues: Thyroxine 5-deiodinase (301 aa).

Residues 1 to 41 (MSRQAAPRWVVGEGRGTLGGAATMLRSLLLHSLRLCSQTAS) lie on the Cytoplasmic side of the membrane. The helical; Signal-anchor for type II membrane protein transmembrane segment at 42–64 (CLVLFPRFLGTAFMLWLLDFLCI) threads the bilayer. Over 65 to 301 (RKHLLGRRRR…QLHGPQPRRV (237 aa)) the chain is Extracellular. Residue Sec167 is part of the active site. Residue Sec167 is a non-standard amino acid, selenocysteine.

Belongs to the iodothyronine deiodinase family. Monomer. Homodimer. May undergo minor heretodimerization with DIO1 and DIO2. Highly expressed in mammary gland. Detected at lower levels in kidney, and at very low levels in the other tissues.

The protein localises to the cell membrane. Its subcellular location is the endosome membrane. It catalyses the reaction 3,3',5'-triiodo-L-thyronine + iodide + A + H(+) = L-thyroxine + AH2. The catalysed reaction is 3,3'-diiodo-L-thyronine + iodide + A + H(+) = 3,3',5-triiodo-L-thyronine + AH2. The enzyme catalyses 3-iodo-L-thyronine + iodide + A + H(+) = 3,5-diiodo-L-thyronine + AH2. It carries out the reaction L-thyronine + iodide + A + H(+) = 3-iodo-L-thyronine + AH2. It catalyses the reaction 3',5'-diiodo-L-thyronine + iodide + A + H(+) = 3,3',5'-triiodo-L-thyronine + AH2. The catalysed reaction is 3'-iodo-L-thyronine + iodide + A + H(+) = 3,3'-diiodo-L-thyronine + AH2. The enzyme catalyses 3,3',5'-triiodothyronamine + iodide + A + H(+) = 3,3',5,5'-tetraiodothyronamine + AH2. It carries out the reaction 3',5'-diiodothyronamine + iodide + A + H(+) = 3,3',5'-triiodothyronamine + AH2. It catalyses the reaction 3,3'-diiodothyronamine + iodide + A + H(+) = 3,3',5-triiodothyronamine + AH2. The catalysed reaction is 3-iodothyronamine + iodide + A + H(+) = 3,5-diiodothyronamine + AH2. The enzyme catalyses 3'-iodothyronamine + iodide + A + H(+) = 3,3'-diiodothyronamine + AH2. It carries out the reaction thyronamine + iodide + A + H(+) = 3-iodothyronamine + AH2. Plays a crucial role in the metabolism of thyroid hormones (TH) and has specific roles in TH activation and inactivation by deiodination. Catalyzes the deiodination of L-thyroxine (T4) to 3,3',5'-triiodothyronine (rT3), 3,5,3'-triiodothyronine (T3) to 3,3'-diiodothyronine (3,3'-T2), 3,5-diiodothyronine (3,5-T2) to 3-monoiodothyronine (3-T1), rT3 to 3',5'-diiodothyronine (3',5'-T2) and 3,3'-T2 to 3'-monoiodothyronine (3'-T1) via inner-ring deiodination (IRD). Catalyzes the deiodination of 3-T1 to L-thyronine (T0) via outer-ring deiodination (ORD). Catalyzes the tyrosyl ring deiodinations of 3,3',5,5'-tetraiodothyronamine, 3,3',5'-triiodothyronamine, 3,5,3'-triiodothyronamine, 3,5-diiodothyronamine, 3,3'-diiodothyronamine and 3-iodothyronamine. The polypeptide is Thyroxine 5-deiodinase (DIO3) (Bos taurus (Bovine)).